Consider the following 119-residue polypeptide: UPF0102 protein Athe_0977 (119 aa).

This sequence belongs to the UPF0102 family.

In Caldicellulosiruptor bescii (strain ATCC BAA-1888 / DSM 6725 / KCTC 15123 / Z-1320) (Anaerocellum thermophilum), this protein is UPF0102 protein Athe_0977.